The following is a 77-amino-acid chain: Acyl carrier protein (77 aa).

The Carrier domain maps to 1 to 76 (MENFDKVKDI…DAVKFINSLE (76 aa)). Ser-36 bears the O-(pantetheine 4'-phosphoryl)serine mark.

It belongs to the acyl carrier protein (ACP) family. 4'-phosphopantetheine is transferred from CoA to a specific serine of apo-ACP by AcpS. This modification is essential for activity because fatty acids are bound in thioester linkage to the sulfhydryl of the prosthetic group.

The protein localises to the cytoplasm. The protein operates within lipid metabolism; fatty acid biosynthesis. Functionally, carrier of the growing fatty acid chain in fatty acid biosynthesis. This chain is Acyl carrier protein, found in Staphylococcus aureus (strain Mu3 / ATCC 700698).